A 574-amino-acid chain; its full sequence is Proline--tRNA ligase (574 aa).

The protein belongs to the class-II aminoacyl-tRNA synthetase family. ProS type 1 subfamily. Homodimer.

It localises to the cytoplasm. The enzyme catalyses tRNA(Pro) + L-proline + ATP = L-prolyl-tRNA(Pro) + AMP + diphosphate. In terms of biological role, catalyzes the attachment of proline to tRNA(Pro) in a two-step reaction: proline is first activated by ATP to form Pro-AMP and then transferred to the acceptor end of tRNA(Pro). As ProRS can inadvertently accommodate and process non-cognate amino acids such as alanine and cysteine, to avoid such errors it has two additional distinct editing activities against alanine. One activity is designated as 'pretransfer' editing and involves the tRNA(Pro)-independent hydrolysis of activated Ala-AMP. The other activity is designated 'posttransfer' editing and involves deacylation of mischarged Ala-tRNA(Pro). The misacylated Cys-tRNA(Pro) is not edited by ProRS. This chain is Proline--tRNA ligase, found in Teredinibacter turnerae (strain ATCC 39867 / T7901).